The following is a 343-amino-acid chain: Small ribosomal subunit biogenesis GTPase RsgA (343 aa).

In terms of domain architecture, CP-type G spans 116-275 (RGQLKPVAAN…LIDSPGIREF (160 aa)). GTP is bound by residues 163–166 (NKFD) and 217–225 (GQSGVGKSS). The Zn(2+) site is built by Cys-299, Cys-304, His-306, and Cys-312.

The protein belongs to the TRAFAC class YlqF/YawG GTPase family. RsgA subfamily. As to quaternary structure, monomer. Associates with 30S ribosomal subunit, binds 16S rRNA. Zn(2+) is required as a cofactor.

Its subcellular location is the cytoplasm. Functionally, one of several proteins that assist in the late maturation steps of the functional core of the 30S ribosomal subunit. Helps release RbfA from mature subunits. May play a role in the assembly of ribosomal proteins into the subunit. Circularly permuted GTPase that catalyzes slow GTP hydrolysis, GTPase activity is stimulated by the 30S ribosomal subunit. The chain is Small ribosomal subunit biogenesis GTPase RsgA from Pseudomonas fluorescens (strain SBW25).